A 694-amino-acid polypeptide reads, in one-letter code: Putative L-type lectin-domain containing receptor kinase II.2 (694 aa).

The signal sequence occupies residues 1 to 24; sequence MAGVLRSLRFWMIICVQVLSLVLA. Residues 25 to 318 lie on the Extracellular side of the membrane; sequence QDRDEFVYHD…PTSRSKDSKN (294 aa). Residues 27 to 272 are legume-lectin like; sequence RDEFVYHDFS…DQYILGWSFK (246 aa). 10 N-linked (GlcNAc...) asparagine glycosylation sites follow: Asn57, Asn58, Asn73, Asn131, Asn172, Asn183, Asn201, Asn208, Asn240, and Asn246. The tract at residues 283 to 314 is disordered; that stretch reads SKILDPPNRPPPPSSPPPPPPPPPTPPTSRSK. Residues 289 to 309 show a composition bias toward pro residues; sequence PNRPPPPSSPPPPPPPPPTPP. Residues 319 to 339 traverse the membrane as a helical segment; that stretch reads IIIICVTVTSIAFLLMLGGFL. Over 340-694 the chain is Cytoplasmic; that stretch reads YLYKKKKYAE…EDVTILFGGR (355 aa). The Protein kinase domain maps to 375–650; the sequence is FRENRLLGAG…IQYLEGNATI (276 aa). Residues 381-389 and Lys403 each bind ATP; that span reads LGAGGFGKV. The Proton acceptor role is filled by Asp500.

It in the C-terminal section; belongs to the protein kinase superfamily. Ser/Thr protein kinase family. The protein in the N-terminal section; belongs to the leguminous lectin family.

It localises to the cell membrane. It carries out the reaction L-seryl-[protein] + ATP = O-phospho-L-seryl-[protein] + ADP + H(+). It catalyses the reaction L-threonyl-[protein] + ATP = O-phospho-L-threonyl-[protein] + ADP + H(+). This is Putative L-type lectin-domain containing receptor kinase II.2 (LECRK22) from Arabidopsis thaliana (Mouse-ear cress).